The sequence spans 536 residues: Heparanase (536 aa).

The first 28 residues, 1–28 (MLRPLLLLWLWGRLGALTQGTPAGTAPT), serve as a signal peptide directing secretion. Residues 55 to 57 (DAS) and Thr90 each bind heparan sulfate group. Positions 103-150 (PTSEERSYWQSQDNNDICGSERVSADVLRKLQMEWPFQELLLLREQYQ) are cleaved as a propeptide — linker peptide. The cysteines at positions 120 and 172 are disulfide-linked. Residue 151–155 (REFKN) participates in heparan sulfate group binding. N-linked (GlcNAc...) asparagine glycosylation is found at Asn155, Asn193, and Asn210. Residue Glu218 is the Proton donor of the active site. Residues 263 to 273 (QPRGKTVKLLR), His289, and Arg296 each bind heparan sulfate group. Residues 281–410 (EVIDSLTWHH…LLFKKLVGPK (130 aa)) form a required for heterodimerization with the heparanase 8 kDa subunit region. Glu336 acts as the Nucleophile in catalysis. Heparan sulfate group contacts are provided by residues 341–343 (YGG) and 382–384 (GNY). Residues Cys430 and Cys535 are joined by a disulfide bond. Asn452 carries N-linked (GlcNAc...) asparagine glycosylation. The required for transferring proheparanase to the Golgi apparatus, secretion and subsequent enzyme activity and for enhancement of PKB/AKT1 phosphorylation stretch occupies residues 520–536 (FSYGFFVIRNAKIAACI).

This sequence belongs to the glycosyl hydrolase 79 family. In terms of assembly, heterodimer; heterodimer formation between the 8 kDa and the 50 kDa subunits is required for enzyme activity. Interacts with TF; the interaction, inhibited by heparin, enhances the generation of activated factor X and activates coagulation. Interacts with HRG; the interaction is enhanced at acidic pH, partially inhibits binding of HPSE to cell surface receptors and modulates its enzymatic activity. Interacts with SDC1; the interaction enhances the shedding of SDC1. Interacts with HPSE2. Proteolytically processed. The cleavage of the 65 kDa form leads to the generation of a linker peptide, and the 8 kDa and 50 kDa products. The active form, the 8/50 kDa heterodimer, is resistant to degradation. Complete removal of the linker peptide appears to be a prerequisite to the complete activation of the enzyme. Post-translationally, N-glycosylated. Glycosylation of the 50 kDa subunit appears to be essential for its solubility.

Its subcellular location is the lysosome membrane. It is found in the secreted. It localises to the nucleus. The catalysed reaction is endohydrolysis of (1-&gt;4)-beta-D-glycosidic bonds of heparan sulfate chains in heparan sulfate proteoglycan.. Its activity is regulated as follows. Inhibited by laminarin sulfate and, to a lower extent, by heparin and sulfamin. Activated by calcium and magnesium. Inhibited by EDTA. Its function is as follows. Endoglycosidase that cleaves heparan sulfate proteoglycans (HSPGs) into heparan sulfate side chains and core proteoglycans. Participates in extracellular matrix (ECM) degradation and remodeling. Selectively cleaves the linkage between a glucuronic acid unit and an N-sulfo glucosamine unit carrying either a 3-O-sulfo or a 6-O-sulfo group. Can also cleave the linkage between a glucuronic acid unit and an N-sulfo glucosamine unit carrying a 2-O-sulfo group, but not linkages between a glucuronic acid unit and a 2-O-sulfated iduronic acid moiety. It is essentially inactive at neutral pH but becomes active under acidic conditions such as during tumor invasion and in inflammatory processes. Facilitates cell migration associated with metastasis, wound healing and inflammation. Enhances shedding of syndecans, and increases endothelial invasion and angiogenesis in myelomas. Acts as a procoagulant by increasing the generation of activation factor X in the presence of tissue factor and activation factor VII. Increases cell adhesion to the extracellular matrix (ECM), independent of its enzymatic activity. Induces AKT1/PKB phosphorylation via lipid rafts increasing cell mobility and invasion. Heparin increases this AKT1/PKB activation. Regulates osteogenesis. Enhances angiogenesis through up-regulation of SRC-mediated activation of VEGF. Implicated in hair follicle inner root sheath differentiation and hair homeostasis. The chain is Heparanase (Hpse) from Rattus norvegicus (Rat).